Reading from the N-terminus, the 800-residue chain is Phenylalanine--tRNA ligase beta subunit (800 aa).

One can recognise a tRNA-binding domain in the interval 39 to 147; it reads FDAIADIVVG…QDSVPGVRLV (109 aa). The B5 domain occupies 401 to 477; it reads WQAAQLRFRP…RVYGMDNIPP (77 aa). Mg(2+) is bound by residues Asp455, Asp461, Glu464, and Glu465. Residues 706-800 enclose the FDX-ACB domain; it reads PVFPPVKRDI…SLTEALGVRI (95 aa).

Belongs to the phenylalanyl-tRNA synthetase beta subunit family. Type 1 subfamily. In terms of assembly, tetramer of two alpha and two beta subunits. The cofactor is Mg(2+).

The protein localises to the cytoplasm. The catalysed reaction is tRNA(Phe) + L-phenylalanine + ATP = L-phenylalanyl-tRNA(Phe) + AMP + diphosphate + H(+). This chain is Phenylalanine--tRNA ligase beta subunit, found in Oleidesulfovibrio alaskensis (strain ATCC BAA-1058 / DSM 17464 / G20) (Desulfovibrio alaskensis).